Here is a 266-residue protein sequence, read N- to C-terminus: Interleukin-1 beta (266 aa).

Residues 1 to 113 (MAPVPEPINE…ETSSDEFLCD (113 aa)) constitute a propeptide that is removed on maturation.

It belongs to the IL-1 family. Monomer. In its precursor form, weakly interacts with full-length MEFV; the mature cytokine does not interact at all. Interacts with integrins ITGAV:ITGBV and ITGA5:ITGB1; integrin-binding is required for IL1B signaling. Interacts with cargo receptor TMED10; the interaction is direct and is required for the secretion of IL1B mature form. Interacts with HSP90AB1; the interaction facilitates cargo translocation into the ERGIC. Interacts with HSP90B1; the interaction facilitates cargo translocation into the ERGIC.

Its subcellular location is the cytoplasm. It is found in the cytosol. The protein localises to the secreted. The protein resides in the lysosome. It localises to the extracellular exosome. Potent pro-inflammatory cytokine. Initially discovered as the major endogenous pyrogen, induces prostaglandin synthesis, neutrophil influx and activation, T-cell activation and cytokine production, B-cell activation and antibody production, and fibroblast proliferation and collagen production. Promotes Th17 differentiation of T-cells. Synergizes with IL12/interleukin-12 to induce IFNG synthesis from T-helper 1 (Th1) cells. Plays a role in angiogenesis by inducing VEGF production synergistically with TNF and IL6. Involved in transduction of inflammation downstream of pyroptosis: its mature form is specifically released in the extracellular milieu by passing through the gasdermin-D (GSDMD) pore. The chain is Interleukin-1 beta (IL1B) from Cervus elaphus (Red deer).